A 201-amino-acid chain; its full sequence is ATP synthase subunit delta, chloroplastic (201 aa).

It belongs to the ATPase delta chain family. As to quaternary structure, F-type ATPases have 2 components, F(1) - the catalytic core - and F(0) - the membrane proton channel. F(1) has five subunits: alpha(3), beta(3), gamma(1), delta(1), epsilon(1). CF(0) has four main subunits: a(1), b(1), b'(1) and c(10-14). The alpha and beta chains form an alternating ring which encloses part of the gamma chain. F(1) is attached to F(0) by a central stalk formed by the gamma and epsilon chains, while a peripheral stalk is formed by the delta, b and b' chains.

The protein resides in the plastid. The protein localises to the chloroplast thylakoid membrane. F(1)F(0) ATP synthase produces ATP from ADP in the presence of a proton or sodium gradient. F-type ATPases consist of two structural domains, F(1) containing the extramembraneous catalytic core and F(0) containing the membrane proton channel, linked together by a central stalk and a peripheral stalk. During catalysis, ATP synthesis in the catalytic domain of F(1) is coupled via a rotary mechanism of the central stalk subunits to proton translocation. Its function is as follows. This protein is part of the stalk that links CF(0) to CF(1). It either transmits conformational changes from CF(0) to CF(1) or is implicated in proton conduction. This chain is ATP synthase subunit delta, chloroplastic, found in Vaucheria litorea (Yellow-green alga).